The following is a 1036-amino-acid chain: Serine/threonine-protein kinase ULK2 (1036 aa).

A Protein kinase domain is found at 9-271; that stretch reads YSKRDLVGHG…FEAFFSHPFL (263 aa). ATP contacts are provided by residues 15–23 and lysine 39; that span reads VGHGAFAVV. The active-site Proton acceptor is aspartate 131. Disordered regions lie at residues 319-348, 418-460, 491-522, 540-588, and 656-695; these read ENLSSPPLGPPNYLQVSKDSASTSSKNSSC, TSTA…ADTA, CCCGHPQGHDSRSRNSSGSPVPQAQSPQSLLS, QKLR…SSDW, and AEQQSKAVFGRSVSTGKLSDQQGKTPICRHQGSTDSLNTE. The span at 335–348 shows a compositional bias: low complexity; sequence SKDSASTSSKNSSC. Polar residues predominate over residues 418–428; sequence TSTASSGTNVH. At serine 430 the chain carries Phosphoserine. Over residues 504 to 521 the composition is skewed to polar residues; that stretch reads RNSSGSPVPQAQSPQSLL. Positions 659–679 are enriched in polar residues; the sequence is QSKAVFGRSVSTGKLSDQQGK. 2 positions are modified to phosphoserine: serine 771 and serine 780. A CTD-like region region spans residues 812–1036; sequence ELPEETLMER…SALCHSTATV (225 aa).

This sequence belongs to the protein kinase superfamily. Ser/Thr protein kinase family. APG1/unc-51/ULK1 subfamily. As to quaternary structure, interacts with SYNGAP1. Component of a complex consisting of ATG13/KIAA0652, ULK1 and RB1CC1/FIP200. Interacts (via C-terminus) with ATG13/KIAA0652. Associates with the mammalian target of rapamycin complex 1 (mTORC1) through an interaction with RPTOR. In terms of processing, autophosphorylated. In response to nutrient limitation, probably phosphorylated and activated by AMPK, leading to activate autophagy.

Its subcellular location is the cytoplasmic vesicle membrane. The catalysed reaction is L-seryl-[protein] + ATP = O-phospho-L-seryl-[protein] + ADP + H(+). The enzyme catalyses L-threonyl-[protein] + ATP = O-phospho-L-threonyl-[protein] + ADP + H(+). Functionally, serine/threonine-protein kinase involved in autophagy in response to starvation. Acts upstream of phosphatidylinositol 3-kinase PIK3C3 to regulate the formation of autophagophores, the precursors of autophagosomes. Part of regulatory feedback loops in autophagy: acts both as a downstream effector and a negative regulator of mammalian target of rapamycin complex 1 (mTORC1) via interaction with RPTOR. Activated via phosphorylation by AMPK, also acts as a negative regulator of AMPK through phosphorylation of the AMPK subunits PRKAA1, PRKAB2 and PRKAG1. May phosphorylate ATG13/KIAA0652, FRS2, FRS3 and RPTOR; however such data need additional evidences. Not involved in ammonia-induced autophagy or in autophagic response of cerebellar granule neurons (CGN) to low potassium concentration. Plays a role early in neuronal differentiation and is required for granule cell axon formation: may govern axon formation via Ras-like GTPase signaling and through regulation of the Rab5-mediated endocytic pathways within developing axons. The protein is Serine/threonine-protein kinase ULK2 (ULK2) of Homo sapiens (Human).